Here is a 210-residue protein sequence, read N- to C-terminus: MLAHMPAARTFLQHPDPLTREIAEGYAGGSFLMDNGDGLRWYGVPGRALVPLTEDAGLHVARRMRRELKHFRPSVDLAFDEVIAGCRGHLPGSPERDGEWISDELVEIYQHLHTTGLAHSFEVWQGDELAGGVLGLALGGAFIAESKFHRLTNGSKAALIHLAEHLDRQGFALLDAQIQNPHLATLGVYEVTDKEYRRLLRRALALDVEL.

This sequence belongs to the L/F-transferase family.

The protein localises to the cytoplasm. The enzyme catalyses N-terminal L-lysyl-[protein] + L-leucyl-tRNA(Leu) = N-terminal L-leucyl-L-lysyl-[protein] + tRNA(Leu) + H(+). It carries out the reaction N-terminal L-arginyl-[protein] + L-leucyl-tRNA(Leu) = N-terminal L-leucyl-L-arginyl-[protein] + tRNA(Leu) + H(+). It catalyses the reaction L-phenylalanyl-tRNA(Phe) + an N-terminal L-alpha-aminoacyl-[protein] = an N-terminal L-phenylalanyl-L-alpha-aminoacyl-[protein] + tRNA(Phe). In terms of biological role, functions in the N-end rule pathway of protein degradation where it conjugates Leu, Phe and, less efficiently, Met from aminoacyl-tRNAs to the N-termini of proteins containing an N-terminal arginine or lysine. The sequence is that of Leucyl/phenylalanyl-tRNA--protein transferase from Deinococcus radiodurans (strain ATCC 13939 / DSM 20539 / JCM 16871 / CCUG 27074 / LMG 4051 / NBRC 15346 / NCIMB 9279 / VKM B-1422 / R1).